The chain runs to 250 residues: Thiamine thiazole synthase (250 aa).

NAD(+)-binding positions include serine 36, 55–56 (EE), glycine 63, valine 126, and 152–154 (HVD). 2 residues coordinate Fe cation: aspartate 154 and histidine 169. An NAD(+)-binding site is contributed by methionine 216. Glycine is bound at residue arginine 226.

Belongs to the THI4 family. As to quaternary structure, homooctamer; tetramer of dimers. Requires Fe(2+) as cofactor.

The enzyme catalyses hydrogen sulfide + glycine + NAD(+) = ADP-5-ethyl-4-methylthiazole-2-carboxylate + nicotinamide + 3 H2O + H(+). The protein operates within cofactor biosynthesis; thiamine diphosphate biosynthesis. In terms of biological role, involved in the biosynthesis of the thiazole moiety of thiamine. Catalyzes the conversion of NAD and glycine to adenosine diphosphate 5-(2-hydroxyethyl)-4-methylthiazole-2-carboxylate (ADT), an adenylated thiazole intermediate, using free sulfide as a source of sulfur. In Thermotoga maritima (strain ATCC 43589 / DSM 3109 / JCM 10099 / NBRC 100826 / MSB8), this protein is Thiamine thiazole synthase.